The chain runs to 242 residues: Transcription factor bHLH100 (242 aa).

Positions 61–113 (MKKLNHNASERERRKKINTMFSSLRSCLPPTNQTKKLSVSATVSQALKYIPEL) constitute a bHLH domain.

In terms of assembly, homodimer. Expressed constitutively in roots, leaves, and stems.

It localises to the nucleus. In terms of biological role, plays a role in metal homeostasis. Confers tolerance to high zinc (Zn) and nickel (Ni). The polypeptide is Transcription factor bHLH100 (BHLH100) (Arabidopsis thaliana (Mouse-ear cress)).